We begin with the raw amino-acid sequence, 400 residues long: uncharacterized protein (400 aa).

Over residues 112 to 126 the composition is skewed to basic and acidic residues; sequence SESTAQIEKKPRKPL. Residues 112 to 151 are disordered; the sequence is SESTAQIEKKPRKPLDSVGLLEGDRNKRKKSPQMNDFNIK.

This is an uncharacterized protein from Homo sapiens (Human).